The following is a 112-amino-acid chain: uncharacterized protein (112 aa).

The next 2 membrane-spanning stretches (helical) occupy residues 33-53 (IIGI…MIIF) and 69-89 (MNNI…HITV).

The protein localises to the membrane. This is an uncharacterized protein from Saccharomyces cerevisiae (strain ATCC 204508 / S288c) (Baker's yeast).